The chain runs to 883 residues: MTLKMDRKALKEEKKKQKLEKFLNKKTTQSKISKAPKPAKNKSSSGYDPMPVEQKWNNYWLSNNLFEPQERSNKFVMCMPPPNITGSLHIGHSMMIAIQDAICRYMRLINYEVLYLPGTDHAGIATQTVVMKQLEKEKKTYNRESFLEATWKWKENYGSRILDQFKRLGTSADFSRQKFTMDAGMNKAVTEAFCSLYEKGLIYRDNKIVNWCCKLQTTLSDIEIDYLSVGKNTILKIDGRDYEFGVIYVFKYPVKFVKDGYESEGHIEVATTRPETILGDVALCANPKDARYTKYDKIIPRNPITEEELSFVFDEAAEMDLESGVLKITPAHDPIDFEIGKKNNLKNIKIFDNQNKIIIEGNYYKLKRLDARDLVVQTLKNKNLFVEKKPYEQVLPMCSRSSDLLEPVIKEQWWCSCSEMAKKAIDAVKTEQIKIYPEESKDDWYRWFENPRDWCLSRQLWWGHRIPAYKTPDGVWTIARNKEQAIQSYKKNNPLNVHYQESDFVQDEDVLDTWFSSGLWPFATLGWPNKNQDLDKYFPTSLLETGKDILFFWVGRMVMMSLELTGKVPFKKVLLHGIVRDAYGRKMSKSLGNVIDPIHVIDGASIETLLDALKLGNLTKENLINAESAVKKDFINGITVCGADALRFTLLSYMNGINDIKLDIERVKGNRKFCNKIWNAALFVKKIVDEIISSDSLSYQDLLNLDLSNEDDKLLVWLIQERNKVISTTHKAFKEYKFMSAVQSIHQFFLYDFCDVYIEIVKKIKTKKYIQACFMVLIDSIKIFSPYMPFITEEIYSQFFDNSLMYTSYPEIIHNKFSTNFKSTLSKIKAIRADIEKYGKEKVDVILDGCECFDKIDIQFISILIPNINTIKFGEGYEVKKVN.

A compositionally biased stretch (basic and acidic residues) spans 1–23 (MTLKMDRKALKEEKKKQKLEKFL). The disordered stretch occupies residues 1–49 (MTLKMDRKALKEEKKKQKLEKFLNKKTTQSKISKAPKPAKNKSSSGYDP). Residues 30-45 (SKISKAPKPAKNKSSS) show a composition bias toward low complexity. The 'HIGH' region motif lies at 82 to 92 (PNITGSLHIGH). A 'KMSKS' region motif is present at residues 586–590 (KMSKS). K589 contributes to the ATP binding site.

It belongs to the class-I aminoacyl-tRNA synthetase family.

Its subcellular location is the cytoplasm. It catalyses the reaction tRNA(Val) + L-valine + ATP = L-valyl-tRNA(Val) + AMP + diphosphate. This chain is Probable valine--tRNA ligase, cytoplasmic, found in Vairimorpha ceranae (strain BRL01) (Microsporidian parasite).